Here is a 331-residue protein sequence, read N- to C-terminus: Threonine-phosphate decarboxylase (331 aa).

Lys-192 is subject to N6-(pyridoxal phosphate)lysine.

It belongs to the class-I pyridoxal-phosphate-dependent aminotransferase family. In terms of assembly, homodimer. It depends on pyridoxal 5'-phosphate as a cofactor.

The protein localises to the cytoplasm. The catalysed reaction is O-phospho-L-threonine + H(+) = (R)-1-aminopropan-2-yl phosphate + CO2. It functions in the pathway cofactor biosynthesis; adenosylcobalamin biosynthesis. Functionally, decarboxylates L-threonine-O-3-phosphate to yield (R)-1-amino-2-propanol O-2-phosphate, the precursor for the linkage between the nucleotide loop and the corrin ring in cobalamin. This chain is Threonine-phosphate decarboxylase (cobC), found in Pseudomonas aeruginosa (strain ATCC 15692 / DSM 22644 / CIP 104116 / JCM 14847 / LMG 12228 / 1C / PRS 101 / PAO1).